The following is a 974-amino-acid chain: Probable proton ATPase 1A (974 aa).

Positions 1-23 are enriched in basic and acidic residues; sequence MSSKKYELDAAAFEDKPESHSDA. A disordered region spans residues 1–61; that stretch reads MSSKKYELDA…ATDLLPPSKG (61 aa). At 1–92 the chain is on the cytoplasmic side; that stretch reads MSSKKYELDA…KTPSWLIYVR (92 aa). Residues 93 to 112 form a helical membrane-spanning segment; the sequence is GLWGPMPAALWIAIIIEFAL. Residues 113–117 are Extracellular-facing; the sequence is ENWPD. The chain crosses the membrane as a helical span at residues 118 to 137; the sequence is GAILFAIQIANATIGWYETI. At 138 to 264 the chain is on the cytoplasmic side; the sequence is KAGDAVAALK…LGNIHVILRR (127 aa). A helical transmembrane segment spans residues 265-286; that stretch reads VMFSLCAISFMLCMCCFIYLLA. Residues 287–294 are Extracellular-facing; the sequence is RFYETFRH. The chain crosses the membrane as a helical span at residues 295-321; that stretch reads ALQFAVVVLVVSIPIALEIVVTTTLAV. Residues 322–630 lie on the Cytoplasmic side of the membrane; the sequence is GSKHLSKHKI…AVHGATDAAR (309 aa). Asp351 serves as the catalytic 4-aspartylphosphate intermediate. Positions 605 and 609 each coordinate Mg(2+). A helical transmembrane segment spans residues 631 to 651; sequence AAADMVLTEPGLSVVVEAMLV. The Extracellular portion of the chain corresponds to 652-661; sequence SREVFQRMLS. A helical transmembrane segment spans residues 662 to 684; that stretch reads FLTYRISATLQLVCFFFIACFSL. Topologically, residues 685-697 are cytoplasmic; that stretch reads TPKAYGSVDPHFQ. The helical transmembrane segment at 698-712 threads the bilayer; the sequence is FFHLPVLMFMLITLL. Over 713 to 737 the chain is Extracellular; the sequence is NDGCLMTIGYDHVIPSERPQKWNLP. Residue Asp714 coordinates Mg(2+). A helical membrane pass occupies residues 738–761; sequence VVFVSASILAAVACGSSLMLLWIG. Over 762–812 the chain is Cytoplasmic; sequence LEGYSSQYYENSWFHRLGLAQLPQGKLVTMMYLKISISDFLTLFSSRTGGH. Residues 813-840 form a helical membrane-spanning segment; the sequence is FFFYMPPSPILFCGAIISLLVSTMAASF. Over 841-868 the chain is Extracellular; it reads WHKSRPDNVLTEGLAWGQTNAEKLLPLW. A helical membrane pass occupies residues 869–887; it reads VWIYCIVWWFVQDVVKVLA. Residues 888–974 lie on the Cytoplasmic side of the membrane; the sequence is HICMDAVDLF…VNVYVSRDQK (87 aa). Residues 950-959 show a composition bias toward basic and acidic residues; that stretch reads GLREDTHSPI. Residues 950–974 are disordered; it reads GLREDTHSPIEEASPVNVYVSRDQK.

This sequence belongs to the cation transport ATPase (P-type) (TC 3.A.3) family. Type IIIA subfamily.

The protein localises to the membrane. It catalyses the reaction ATP + H2O + H(+)(in) = ADP + phosphate + 2 H(+)(out). In Leishmania donovani, this protein is Probable proton ATPase 1A (H1A).